We begin with the raw amino-acid sequence, 770 residues long: Amyloid-beta precursor protein (770 aa).

An N-terminal signal peptide occupies residues 1-17 (MLPSLALLLLTTWTARA). At 18 to 701 (LEVPTDGNAG…AEDVGSNKGA (684 aa)) the chain is on the extracellular side. The segment at 28-123 (LLAEPQIAMF…PYRCLVGEFV (96 aa)) is GFLD subdomain. Residues 28 to 189 (LLAEPQIAMF…RGVEFVCCPL (162 aa)) enclose the E1 domain. 6 disulfide bridges follow: cysteine 38–cysteine 62, cysteine 73–cysteine 117, cysteine 98–cysteine 105, cysteine 133–cysteine 187, cysteine 144–cysteine 174, and cysteine 158–cysteine 186. 96–110 (NWCKRSRKQCKTHPH) serves as a coordination point for heparin. A cuBD subdomain region spans residues 131–189 (DKCKFLHQERMDVCETHLHWHTVAKETCSEKSTNLHDYGMLLPCGIDKFRGVEFVCCPL). The copper-binding stretch occupies residues 135–155 (FLHQERMDVCETHLHWHTVAK). Residues histidine 147, histidine 151, and tyrosine 168 each contribute to the Cu(2+) site. The interval 181–188 (GVEFVCCP) is zinc-binding. Zn(2+)-binding residues include glutamate 183, cysteine 186, and cysteine 187. The span at 196-207 (IDSADAEEDDSD) shows a compositional bias: acidic residues. A disordered region spans residues 196 to 281 (IDSADAEEDD…IATTTTTTTE (86 aa)). Serine 198 bears the Phosphoserine; by CK2 mark. Serine 206 carries the post-translational modification Phosphoserine; by CK1. Tyrosine 217 carries the sulfotyrosine modification. Residues 228–264 (VAEEEEVADVEEEEADDDEDVEDGDEVEEEAEEPYEE) are compositionally biased toward acidic residues. Positions 268 to 281 (KTTSIATTTTTTTE) are enriched in low complexity. Cystine bridges form between cysteine 291-cysteine 341, cysteine 300-cysteine 324, and cysteine 316-cysteine 337. One can recognise a BPTI/Kunitz inhibitor domain in the interval 291–341 (CSEQAETGPCRSMISRWYFDVTEGKCAPFFYGGCGGNRNNFDTEEYCMAVC). Tyrosine 336 carries the sulfotyrosine modification. The OX-2 signature appears at 344–365 (VMSQNLLKTSGEPVSQGPVKLP). The 192-residue stretch at 374 to 565 (AVDKYLETPG…EEIQDEVDEL (192 aa)) folds into the E2 domain. The heparin-binding stretch occupies residues 391–423 (FQKAKERLEAKHRERMSQVMREWEEAERQAKNL). Serine 441 carries the phosphoserine modification. The interval 491–522 (FNMLKKYVRAEQKDRQHTLKHFEHVRMVDPKK) is heparin-binding. Tyrosine 497 carries the post-translational modification Phosphotyrosine. The collagen-binding stretch occupies residues 523 to 540 (AAQIRSQVMTHLRVIYER). Residues asparagine 542 and asparagine 571 are each glycosylated (N-linked (GlcNAc...) asparagine). Serine 656 carries O-linked (Xyl...) (chondroitin sulfate) serine glycosylation. Cu(2+) is bound by residues histidine 677, tyrosine 681, histidine 684, and histidine 685. Positions 677, 681, 684, and 685 each coordinate Zn(2+). The segment at 695 to 722 (VGSNKGAIIGLMVGGVVIATVIVITLVM) is interaction with PSEN1. Residues 702-722 (IIGLMVGGVVIATVIVITLVM) form a helical membrane-spanning segment. Residues 723–770 (LKKKQYTSIHHGVVEVDAAVTPEERHLSKMQQNGYENPTYKFFEQMQN) are Cytoplasmic-facing. Residues 724–734 (KKKQYTSIHHG) carry the Basolateral sorting signal motif. Threonine 729 is subject to Phosphothreonine. The residue at position 730 (serine 730) is a Phosphoserine; by APP-kinase I. Residues 732–751 (HHGVVEVDAAVTPEERHLSK) form an interaction with G(o)-alpha region. Position 743 is a phosphothreonine; by CDK5 and MAPK10 (threonine 743). The interval 756 to 770 (GYENPTYKFFEQMQN) is required for the interaction with KIF5B and for anterograde transport in axons. Tyrosine 757 is modified (phosphotyrosine; by ABL1). The YENPXY motif; contains endocytosis signal motif lies at 757 to 762 (YENPTY). Residue lysine 763 forms a Glycyl lysine isopeptide (Lys-Gly) (interchain with G-Cter in ubiquitin) linkage.

The protein belongs to the APP family. In terms of assembly, binds, via its C-terminus, to the PID domain of several cytoplasmic proteins, including APBB family members, the APBA family, MAPK8IP1, SHC1 and NUMB and DAB1. Binding to DAB1 inhibits its serine phosphorylation. Interacts (via NPXY motif) with DAB2 (via PID domain); the interaction is impaired by tyrosine phosphorylation of the NPXY motif. Also interacts with GPCR-like protein BPP, APPBP1, IB1, KNS2 (via its TPR domains), APPBP2 (via BaSS) and DDB1. In vitro, it binds MAPT via the MT-binding domains. Associates with microtubules in the presence of ATP and in a kinesin-dependent manner. Interacts, through a C-terminal domain, with GNAO1. Amyloid-beta protein 42 binds CHRNA7 in hippocampal neurons. Amyloid-beta associates with HADH2. Interacts with CPEB1, ANKS1B and AGER. Interacts with ITM2B. Interacts with ITM2C. Interacts with IDE. Can form homodimers; dimerization is enhanced in the presence of Cu(2+) ions. Can form homodimers; this is promoted by heparin binding. Amyloid-beta protein 40 interacts with S100A9. CTF-alpha product of APP interacts with GSAP. Isoform APP695 interacts with SORL1 (via N-terminal ectodomain); this interaction retains APP in the trans-Golgi network and reduces processing into soluble APP-alpha and amyloid-beta peptides. Isoform APP770 interacts with SORL1. The C99 fragment also interacts with SORL1. Interacts with PLD3. Interacts with VDAC1. Interacts with NSG1; could regulate APP processing. Amyloid-beta protein 42 interacts with FPR2. Interacts (via transmembrane region) with PSEN1; the interaction is direct. Interacts with LRRK2. Interacts (via cytoplasmic domain) with KIF5B. Interacts (via C-terminus) with APBB2/FE65L1 (via C-terminus). Interacts (via intracellular domain) with APBB3. Proteolytically processed under normal cellular conditions. Cleavage either by alpha-secretase, beta-secretase or theta-secretase leads to generation and extracellular release of soluble APP peptides, S-APP-alpha and S-APP-beta, and the retention of corresponding membrane-anchored C-terminal fragments, C80, C83 and C99. Subsequent processing of C80 and C83 by gamma-secretase yields P3 peptides. This is the major secretory pathway and is non-amyloidogenic. Alternatively, presenilin/nicastrin-mediated gamma-secretase processing of C99 releases the amyloid-beta proteins, amyloid-beta protein 40 and amyloid-beta protein 42, major components of amyloid plaques, and the cytotoxic C-terminal fragments, gamma-CTF(50), gamma-CTF(57) and gamma-CTF(59). PSEN1 cleavage is more efficient with C83 than with C99 as substrate (in vitro). Amyloid-beta protein 40 and Amyloid-beta protein 42 are cleaved by ACE. Many other minor amyloid-beta peptides, amyloid-beta 1-X peptides, are found in cerebral spinal fluid (CSF) including the amyloid-beta X-15 peptides, produced from the cleavage by alpha-secretase. Post-translationally, proteolytically cleaved by caspases during neuronal apoptosis. Cleavage at Asp-739 by either CASP6, CASP8 or CASP9 results in the production of the neurotoxic C31 peptide and the increased production of amyloid-beta peptides. In terms of processing, N- and O-glycosylated. Phosphorylation in the C-terminal on tyrosine, threonine and serine residues is neuron-specific. Phosphorylation can affect APP processing, neuronal differentiation and interaction with other proteins. Phosphorylated on Thr-743 in neuronal cells by Cdc5 kinase and Mapk10, in dividing cells by Cdc2 kinase in a cell-cycle dependent manner with maximal levels at the G2/M phase and, in vitro, by GSK-3-beta. The Thr-743 phosphorylated form causes a conformational change which reduces binding of Fe65 family members. In dopaminergic (DA) neurons, phosphorylation on Thr-743 by LRKK2 promotes the production and the nuclear translocation of the APP intracellular domain (AICD) which induces DA neuron apoptosis. Phosphorylation on Tyr-757 is required for SHC binding. Phosphorylated in the extracellular domain by casein kinases on both soluble and membrane-bound APP. This phosphorylation is inhibited by heparin. Post-translationally, N- and O-glycosylated. O-linkage of chondroitin sulfate to the L-APP isoforms produces the APP proteoglycan core proteins, the appicans. In terms of processing, extracellular binding and reduction of copper, results in a corresponding oxidation of Cys-144 and Cys-158, and the formation of a disulfide bond. Trophic-factor deprivation triggers the cleavage of surface APP by beta-secretase to release sAPP-beta which is further cleaved to release an N-terminal fragment of APP (N-APP). Post-translationally, amyloid-beta peptides are degraded by IDE. In terms of processing, sulfated on tyrosine residues. Isoform APP695 is the major isoform found in brain. The longer isoforms containing the BPTI domain are predominantly expressed in peripheral organs such as muscle and liver.

Its subcellular location is the cell membrane. The protein resides in the membrane. It localises to the perikaryon. It is found in the cell projection. The protein localises to the growth cone. Its subcellular location is the clathrin-coated pit. The protein resides in the early endosome. It localises to the cytoplasmic vesicle. It is found in the endoplasmic reticulum. The protein localises to the golgi apparatus. Its subcellular location is the secreted. The protein resides in the cell surface. It localises to the nucleus. It is found in the cytoplasm. Functions as a cell surface receptor and performs physiological functions on the surface of neurons relevant to neurite growth, neuronal adhesion and axonogenesis. Interaction between APP molecules on neighboring cells promotes synaptogenesis. Involved in cell mobility and transcription regulation through protein-protein interactions. Can promote transcription activation through binding to APBB1-KAT5 and inhibit Notch signaling through interaction with Numb. Couples to apoptosis-inducing pathways such as those mediated by G(o) and JIP. Inhibits G(o)-alpha ATPase activity. Acts as a kinesin I membrane receptor, mediating the axonal transport of beta-secretase and presenilin 1. By acting as a kinesin I membrane receptor, plays a role in axonal anterograde transport of cargo towards synapses in axons. May be involved in copper homeostasis/oxidative stress through copper ion reduction. In vitro, copper-metallated APP induces neuronal death directly or is potentiated through Cu(2+)-mediated low-density lipoprotein oxidation. Can regulate neurite outgrowth through binding to components of the extracellular matrix such as heparin and collagen I and IV. Induces a AGER-dependent pathway that involves activation of p38 MAPK, resulting in internalization of amyloid-beta peptide and mitochondrial dysfunction in cultured cortical neurons. Provides Cu(2+) ions for GPC1 which are required for release of nitric oxide (NO) and subsequent degradation of the heparan sulfate chains on GPC1. Functionally, amyloid-beta peptides are lipophilic metal chelators with metal-reducing activity. Binds transient metals such as copper, zinc and iron. Amyloid-beta peptides bind to lipoproteins and apolipoproteins E and J in the CSF and to HDL particles in plasma, inhibiting metal-catalyzed oxidation of lipoproteins. Also bind GPC1 in lipid rafts. Its function is as follows. Appicans elicit adhesion of neural cells to the extracellular matrix and may regulate neurite outgrowth in the brain. In terms of biological role, the gamma-CTF peptides as well as the caspase-cleaved peptides, including C31, are potent enhancers of neuronal apoptosis. The protein is Amyloid-beta precursor protein of Cavia porcellus (Guinea pig).